We begin with the raw amino-acid sequence, 460 residues long: MYRKQPLESLCRDLRNGTVSAAEIREQALSAEARLKHLNCFIRDGDAEEQFSKASDAFKGGALWGIPVSFKDNICVKDLPVTAGTPGMTGCIATHDAFIVKKLKSLGAVVAGKNNMHELSFGITSVNVQWGTAGNPAAPGYCAGGSSGGCVSRPWSAGLYRSPSDTGGSVRIPAAFCGIAGFRPTTGRWASSGIIPVSHTKDAPGLLTRTVKDAAFLYGLISGSNTGEPSCEVRKLPCRVGLPASLWTGLDDHVERACFTAIRRMQDAGFDCVELDDGGIYALNETLTFTIPLYEFFTDFPRALLGLGWEQKIDAVFSHIADPHVRKIIHAHLAEELISRAEAASAVRDIGRLRLQMNALFQRQNIGLLAYPRHRVTSPCQVPPLSHVTGRSFFAEVIVNTDLASNAALPSVSLPVAPPGALPVGLSFDAPTGQDLFLLKTAAHIEMLLGTSEPDIRTYW.

Active-site charge relay system residues include lysine 71 and serine 146. The active-site Acyl-ester intermediate is serine 169.

It belongs to the amidase family.

Its pathway is plant hormone metabolism; auxin biosynthesis. Hydrolyzes indole-3-acetamide (IAM) into indole-3-acetic acid (IAA). In Pantoea agglomerans pv. gypsophilae (Erwinia herbicola), this protein is Indoleacetamide hydrolase (iaaH).